The primary structure comprises 447 residues: Phosphoglucosamine mutase (447 aa).

Catalysis depends on Ser-103, which acts as the Phosphoserine intermediate. Residues Ser-103, Asp-242, Asp-244, and Asp-246 each contribute to the Mg(2+) site. Ser-103 is modified (phosphoserine).

The protein belongs to the phosphohexose mutase family. It depends on Mg(2+) as a cofactor. Post-translationally, activated by phosphorylation.

The enzyme catalyses alpha-D-glucosamine 1-phosphate = D-glucosamine 6-phosphate. In terms of biological role, catalyzes the conversion of glucosamine-6-phosphate to glucosamine-1-phosphate. This is Phosphoglucosamine mutase from Cereibacter sphaeroides (strain ATCC 17025 / ATH 2.4.3) (Rhodobacter sphaeroides).